The sequence spans 156 residues: Phosphopantetheine adenylyltransferase (156 aa).

Thr-10 is a binding site for substrate. ATP-binding positions include 10-11 (TF) and His-18. Lys-42, Leu-74, and Arg-88 together coordinate substrate. ATP contacts are provided by residues 89–91 (GLR), Glu-99, and 124–130 (NAFISSS).

It belongs to the bacterial CoaD family. In terms of assembly, homohexamer. Mg(2+) is required as a cofactor.

Its subcellular location is the cytoplasm. It carries out the reaction (R)-4'-phosphopantetheine + ATP + H(+) = 3'-dephospho-CoA + diphosphate. Its pathway is cofactor biosynthesis; coenzyme A biosynthesis; CoA from (R)-pantothenate: step 4/5. Its function is as follows. Reversibly transfers an adenylyl group from ATP to 4'-phosphopantetheine, yielding dephospho-CoA (dPCoA) and pyrophosphate. The sequence is that of Phosphopantetheine adenylyltransferase from Campylobacter concisus (strain 13826).